A 115-amino-acid polypeptide reads, in one-letter code: Variant surface glycoprotein ANTAT 1.8 (115 aa).

Residue asparagine 42 is glycosylated (N-linked (GlcNAc...) asparagine). A lipid anchor (GPI-anchor amidated aspartate) is attached at aspartate 92. A propeptide spans 93–115 (SSILVNKQLALSVVSAAFAALLF) (removed in mature form).

It localises to the cell membrane. VSG forms a coat on the surface of the parasite. The trypanosome evades the immune response of the host by expressing a series of antigenically distinct VSGs from an estimated 1000 VSG genes. This is Variant surface glycoprotein ANTAT 1.8 from Trypanosoma brucei brucei.